Here is a 138-residue protein sequence, read N- to C-terminus: Small ribosomal subunit protein uS11 (138 aa).

The segment covering 1-12 has biased composition (low complexity); that stretch reads MPPKKAAASSAK. Positions 1–28 are disordered; the sequence is MPPKKAAASSAKKGQKTRRREKKNVPHG. Positions 13–22 are enriched in basic residues; it reads KGQKTRRREK.

The protein belongs to the universal ribosomal protein uS11 family. Part of the 30S ribosomal subunit. Interacts with proteins S7 and S18. Binds to IF-3.

Functionally, located on the platform of the 30S subunit, it bridges several disparate RNA helices of the 16S rRNA. Forms part of the Shine-Dalgarno cleft in the 70S ribosome. This is Small ribosomal subunit protein uS11 from Mycobacterium sp. (strain JLS).